The chain runs to 343 residues: Aspartate-semialdehyde dehydrogenase (343 aa).

Residues 20–23 and 48–49 each bind NADP(+); these read SGAV and RS. Residue Arg108 participates in phosphate binding. Catalysis depends on Cys137, which acts as the Acyl-thioester intermediate. Gln164 lines the substrate pocket. Residue 167-168 coordinates NADP(+); that stretch reads SG. Lys221 contacts phosphate. Arg243 provides a ligand contact to substrate. His250 functions as the Proton acceptor in the catalytic mechanism. Gln323 contributes to the NADP(+) binding site.

The protein belongs to the aspartate-semialdehyde dehydrogenase family. Homodimer.

The enzyme catalyses L-aspartate 4-semialdehyde + phosphate + NADP(+) = 4-phospho-L-aspartate + NADPH + H(+). It functions in the pathway amino-acid biosynthesis; L-lysine biosynthesis via DAP pathway; (S)-tetrahydrodipicolinate from L-aspartate: step 2/4. Its pathway is amino-acid biosynthesis; L-methionine biosynthesis via de novo pathway; L-homoserine from L-aspartate: step 2/3. The protein operates within amino-acid biosynthesis; L-threonine biosynthesis; L-threonine from L-aspartate: step 2/5. Its function is as follows. Catalyzes the NADPH-dependent formation of L-aspartate-semialdehyde (L-ASA) by the reductive dephosphorylation of L-aspartyl-4-phosphate. This Prochlorococcus marinus (strain SARG / CCMP1375 / SS120) protein is Aspartate-semialdehyde dehydrogenase.